The following is a 2104-amino-acid chain: Transmembrane matrix receptor MUP-4 (2104 aa).

Residues 1–15 (MRWVPLVLLPLIASA) form the signal peptide. Residues 16–1860 (ATTYQHRQTY…FCETAPSNLP (1845 aa)) lie on the Extracellular side of the membrane. 3 EGF-like domains span residues 71–110 (VVNE…TSPD), 122–163 (TTNE…VSTS), and 175–213 (SVNE…ASPN). 6 disulfides stabilise this stretch: Cys75–Cys89, Cys83–Cys98, Cys126–Cys142, Cys136–Cys151, Cys179–Cys192, and Cys186–Cys201. The WR1 domain occupies 220–265 (RVCNKPKAPEYYGQQSRQPQCSEGSGCGPNEECRFNTAGEKVCQCR). 3 consecutive EGF-like domains span residues 278-315 (VFSQ…VSPD), 327-360 (VRNE…SNCI), and 377-416 (AANQ…VSSN). 7 disulfide bridges follow: Cys282/Cys294, Cys288/Cys303, Cys331/Cys344, Cys338/Cys353, Cys355/Cys359, Cys381/Cys395, and Cys389/Cys404. One can recognise a VWFA domain in the interval 437-612 (DLVFLIDGSG…DLNTRLRSAI (176 aa)). Residues Asn494 and Asn556 are each glycosylated (N-linked (GlcNAc...) asparagine). 2 consecutive EGF-like domains span residues 728–772 (SNDE…NKCE) and 819–857 (LIDE…KSPE). Intrachain disulfides connect Cys732-Cys746, Cys740-Cys756, Cys758-Cys771, Cys823-Cys836, Cys830-Cys845, Cys873-Cys886, Cys880-Cys895, Cys923-Cys937, Cys931-Cys946, Cys972-Cys985, Cys979-Cys995, Cys1020-Cys1034, Cys1028-Cys1046, Cys1075-Cys1089, Cys1083-Cys1098, Cys1125-Cys1139, Cys1133-Cys1148, Cys1173-Cys1187, Cys1181-Cys1196, Cys1219-Cys1233, and Cys1227-Cys1242. Residues 869 to 907 (QRNECLDGTHNCSMNADCIDLPDGFLCRCKEDFVDISPN) enclose the EGF-like 9; calcium-binding domain. N-linked (GlcNAc...) asparagine glycosylation is present at Asn879. EGF-like domains lie at 919–958 (LVNE…HDEL), 968–1007 (LNQI…KSPL), 1016–1058 (VEPI…VGAV), 1071–1110 (LVNE…ESPV), 1121–1160 (LVNE…QKPE), 1169–1208 (IINE…EMPS), and 1215–1254 (RFDE…EISD). N-linked (GlcNAc...) asparagine glycosylation occurs at Asn1037. An N-linked (GlcNAc...) asparagine glycan is attached at Asn1132. Asn1271, Asn1403, and Asn1576 each carry an N-linked (GlcNAc...) asparagine glycan. SEA domains follow at residues 1322 to 1444 (PTTS…DDAD) and 1495 to 1620 (AVES…PEQL). 3 EGF-like domains span residues 1622 to 1658 (PFSN…LNPS), 1669 to 1705 (GVNE…YVNS), and 1717 to 1754 (SIDY…LRKS). 11 disulfide bridges follow: Cys1626/Cys1637, Cys1631/Cys1646, Cys1673/Cys1687, Cys1681/Cys1696, Cys1721/Cys1733, Cys1727/Cys1742, Cys1776/Cys1789, Cys1783/Cys1798, Cys1821/Cys1830, Cys1824/Cys1841, and Cys1843/Cys1852. N-linked (GlcNAc...) asparagine glycosylation is found at Asn1730 and Asn1782. An EGF-like 20; calcium-binding domain is found at 1772–1810 (DIDECALGLHNCSAAAICIDKKIGYECQCQEGYEDGNPS). The EGF-like 21 domain maps to 1817–1853 (AASLCGLCNGHGDCIHDALSSNVTCACLDGYTGQFCE). The N-linked (GlcNAc...) asparagine glycan is linked to Asn1838. The chain crosses the membrane as a helical span at residues 1861-1881 (LILMTLLALLFLLLTLLCCLY). Residues 1882-2104 (MCARCRCFGA…TTKAEEVNYF (223 aa)) lie on the Cytoplasmic side of the membrane. A compositionally biased stretch (low complexity) spans 2031 to 2040 (SGAMMSSASG). The tract at residues 2031–2104 (SGAMMSSASG…TTKAEEVNYF (74 aa)) is disordered. Basic and acidic residues-rich tracts occupy residues 2062-2076 (VYDR…HDFE) and 2083-2104 (TGTE…VNYF).

Abundant at hypodermal cell-matrix junctions overlying muscle of threefold embryos. Expression continues in body wall muscle in larvae and adults and is also detected in other regions where cells show mechanical attachment to the hypodermis including the inner surface of the pharynx, overlying anal and intestinal muscles, overlying vulval and uterine sex muscles, male tail muscle attachment zones and the six mechanosensory neurons (at protein level).

The protein localises to the cell junction. Its subcellular location is the hemidesmosome. It localises to the cytoplasm. The protein resides in the cytoskeleton. It is found in the cell membrane. Functionally, required for junctional attachments between hypodermis and muscle, and between the apical epithelial surface and the cuticular matrix. Essential for enclosure of the embryo by the hypodermis, hypodermal integrity, embryo elongation, and maintenance of hypodermal morphology in fully elongated embryos. This Caenorhabditis elegans protein is Transmembrane matrix receptor MUP-4.